Here is a 302-residue protein sequence, read N- to C-terminus: MVRTEGDSWDIVTSVGYTALAVAAGRALDAKLDPPLAHDDHAAAFVAAAGAPQLAAAVATADMTSSAAFNAQWVGVRTRFFDNFFADAAGAGVRQHVILAAGLDSRAYRLPWPAITTVFELDQPKVLQFKDEVLKRSGAQPSARRVTVAVDLRDDWPAALREAGFDATQPTGWILEGLLPYLPGAAQDALFERLNDMSAPGSRVAAELGPEPGELERLAASIKTVVGETSDGETQPNLRDLWFDDPRLDTKTWLGERGWTVTEANLVDAAVAYGRPLRDLPPAFENFLSTKFFTAVQDHPRG.

Residues Asp-122 and 151-152 contribute to the S-adenosyl-L-methionine site; that span reads DL.

Belongs to the UPF0677 family.

Exhibits S-adenosyl-L-methionine-dependent methyltransferase activity. In Mycobacteroides abscessus (strain ATCC 19977 / DSM 44196 / CCUG 20993 / CIP 104536 / JCM 13569 / NCTC 13031 / TMC 1543 / L948) (Mycobacterium abscessus), this protein is Putative S-adenosyl-L-methionine-dependent methyltransferase MAB_4586c.